A 240-amino-acid chain; its full sequence is Uridylate kinase (240 aa).

An ATP-binding site is contributed by 13–16 (KFSG). G55 serves as a coordination point for UMP. ATP contacts are provided by G56 and R60. Residues D76 and 137–144 (TGNPFFTT) each bind UMP. 3 residues coordinate ATP: T164, Y170, and D173.

It belongs to the UMP kinase family. In terms of assembly, homohexamer.

It is found in the cytoplasm. The enzyme catalyses UMP + ATP = UDP + ADP. It participates in pyrimidine metabolism; CTP biosynthesis via de novo pathway; UDP from UMP (UMPK route): step 1/1. Its activity is regulated as follows. Inhibited by UTP. In terms of biological role, catalyzes the reversible phosphorylation of UMP to UDP. This chain is Uridylate kinase, found in Helicobacter acinonychis (strain Sheeba).